Consider the following 98-residue polypeptide: MTPVHFSFTSAFILGLMGLAFHRTHLLSALLCLEGMMLSLFIALSLWALQMEAIGYSVAPMLLLAFSACEASAGLALLVATARTHGTDRLQSLNLLQC.

Helical transmembrane passes span methionine 1–phenylalanine 21, alanine 29–leucine 49, and valine 58–leucine 78.

Belongs to the complex I subunit 4L family.

Its subcellular location is the mitochondrion membrane. The enzyme catalyses a ubiquinone + NADH + 5 H(+)(in) = a ubiquinol + NAD(+) + 4 H(+)(out). Its function is as follows. Core subunit of the mitochondrial membrane respiratory chain NADH dehydrogenase (Complex I) which catalyzes electron transfer from NADH through the respiratory chain, using ubiquinone as an electron acceptor. Part of the enzyme membrane arm which is embedded in the lipid bilayer and involved in proton translocation. The sequence is that of NADH-ubiquinone oxidoreductase chain 4L (MT-ND4L) from Salmo salar (Atlantic salmon).